The following is a 492-amino-acid chain: DEAD-box ATP-dependent RNA helicase RhpA (492 aa).

The Q motif signature appears at Pro20 to Glu48. Residues Ile51–Ile220 form the Helicase ATP-binding domain. Ala64–Thr71 contributes to the ATP binding site. The short motif at Asp168–Asp171 is the DEAD box element. The Helicase C-terminal domain occupies Asp231 to Ile393. The segment at Ala445–Arg492 is disordered. Over residues Ser469–Arg492 the composition is skewed to basic residues.

This sequence belongs to the DEAD box helicase family. In terms of assembly, homodimer. Interacts with RNase J (rnj), might be a member of a minimal RNA degradosome complex.

It localises to the cytoplasm. The enzyme catalyses ATP + H2O = ADP + phosphate + H(+). Functionally, DEAD-box RNA helicase probably involved in RNA degradation. Unwinds dsRNA in both 5'- and 3'-directions. The chain is DEAD-box ATP-dependent RNA helicase RhpA (rhpA) from Helicobacter pylori (strain ATCC 700392 / 26695) (Campylobacter pylori).